The sequence spans 101 residues: uncharacterized protein (101 aa).

This is an uncharacterized protein from Bacillus subtilis (strain 168).